A 109-amino-acid chain; its full sequence is uncharacterized protein (109 aa).

A disordered region spans residues 1–25 (METKPNALTGTSLSSTSGQTTQKSI). The segment covering 8 to 22 (LTGTSLSSTSGQTTQ) has biased composition (low complexity). A helical membrane pass occupies residues 42 to 62 (TFGLMAILNLALLLWTLLATL). The interval 84–109 (TTLQKNTPSAKNGLKNTTNKHSHEDM) is disordered. Residues 91-102 (PSAKNGLKNTTN) are compositionally biased toward polar residues.

The protein localises to the host membrane. This is an uncharacterized protein from Bdellovibrio phage phiMH2K (Bacteriophage phiMH2K).